Here is a 623-residue protein sequence, read N- to C-terminus: Glutamine--fructose-6-phosphate aminotransferase [isomerizing] (623 aa).

C2 (nucleophile; for GATase activity) is an active-site residue. The Glutamine amidotransferase type-2 domain maps to 2–228 (CGIVGYIGQA…NDQVVTITAD (227 aa)). SIS domains are found at residues 295-435 (IDEA…LRGN) and 468-613 (LGQD…VDQP). The For Fru-6P isomerization activity role is filled by K618.

In terms of assembly, homodimer.

The protein localises to the cytoplasm. It catalyses the reaction D-fructose 6-phosphate + L-glutamine = D-glucosamine 6-phosphate + L-glutamate. In terms of biological role, catalyzes the first step in hexosamine metabolism, converting fructose-6P into glucosamine-6P using glutamine as a nitrogen source. In Corynebacterium glutamicum (strain ATCC 13032 / DSM 20300 / JCM 1318 / BCRC 11384 / CCUG 27702 / LMG 3730 / NBRC 12168 / NCIMB 10025 / NRRL B-2784 / 534), this protein is Glutamine--fructose-6-phosphate aminotransferase [isomerizing].